The chain runs to 222 residues: PKHD-type hydroxylase Syncc9605_1577 (222 aa).

In terms of domain architecture, Fe2OG dioxygenase spans 80–175 (KVHSLLVSRS…RYVCVGWIES (96 aa)). 3 residues coordinate Fe cation: H98, D100, and H156. R166 is a 2-oxoglutarate binding site.

Requires Fe(2+) as cofactor. L-ascorbate serves as cofactor.

This is PKHD-type hydroxylase Syncc9605_1577 from Synechococcus sp. (strain CC9605).